The sequence spans 334 residues: Replication factor C small subunit (334 aa).

ATP is bound at residue 49-56 (GPPGVGKT).

Belongs to the activator 1 small subunits family. RfcS subfamily. Heteromultimer composed of small subunits (RfcS) and large subunits (RfcL).

Part of the RFC clamp loader complex which loads the PCNA sliding clamp onto DNA. The protein is Replication factor C small subunit of Methanosarcina barkeri (strain Fusaro / DSM 804).